A 475-amino-acid chain; its full sequence is Ribulose bisphosphate carboxylase large chain (475 aa).

A propeptide spanning residues 1 to 2 (MS) is cleaved from the precursor. Proline 3 carries the N-acetylproline modification. Lysine 14 is modified (N6,N6,N6-trimethyllysine). Positions 123 and 173 each coordinate substrate. Lysine 175 (proton acceptor) is an active-site residue. Position 177 (lysine 177) interacts with substrate. Mg(2+) is bound by residues lysine 201, aspartate 203, and glutamate 204. Lysine 201 carries the N6-carboxylysine modification. The Proton acceptor role is filled by histidine 294. Substrate-binding residues include arginine 295, histidine 327, and serine 379.

The protein belongs to the RuBisCO large chain family. Type I subfamily. As to quaternary structure, heterohexadecamer of 8 large chains and 8 small chains; disulfide-linked. The disulfide link is formed within the large subunit homodimers. The cofactor is Mg(2+). In terms of processing, the disulfide bond which can form in the large chain dimeric partners within the hexadecamer appears to be associated with oxidative stress and protein turnover.

Its subcellular location is the plastid. It localises to the chloroplast. It catalyses the reaction 2 (2R)-3-phosphoglycerate + 2 H(+) = D-ribulose 1,5-bisphosphate + CO2 + H2O. The catalysed reaction is D-ribulose 1,5-bisphosphate + O2 = 2-phosphoglycolate + (2R)-3-phosphoglycerate + 2 H(+). RuBisCO catalyzes two reactions: the carboxylation of D-ribulose 1,5-bisphosphate, the primary event in carbon dioxide fixation, as well as the oxidative fragmentation of the pentose substrate in the photorespiration process. Both reactions occur simultaneously and in competition at the same active site. The chain is Ribulose bisphosphate carboxylase large chain from Gossypium hirsutum (Upland cotton).